The primary structure comprises 264 residues: Somatomedin-B and thrombospondin type-1 domain-containing protein (264 aa).

A signal peptide spans 1 to 20 (MRTLWMALCVLARLWPGALA). In terms of domain architecture, SMB spans 24-75 (DAGRCCPGRDPACFASGWRQDRVYGTCFCDQACRLTGDCCFDYARACPARPC). 7 disulfides stabilise this stretch: Cys28/Cys36, Cys28/Cys52, Cys36/Cys70, Cys50/Cys52, Cys50/Cys63, Cys56/Cys62, and Cys63/Cys70. A TSP type-1 domain is found at 74 to 127 (PCIVGEWSPWSGCASQCRPTARVRRRAVQQEPQNGGEPCPALEERAGCLEYATP). Asn227 carries an N-linked (GlcNAc...) asparagine glycan.

Belongs to the thrombospondin family.

Its subcellular location is the secreted. It localises to the extracellular space. The protein resides in the extracellular matrix. This chain is Somatomedin-B and thrombospondin type-1 domain-containing protein (SBSPON), found in Bos taurus (Bovine).